The sequence spans 348 residues: Methylthioribose-1-phosphate isomerase (348 aa).

Substrate-binding positions include 47–49 (RGA), arginine 90, and glutamine 196. The active-site Proton donor is aspartate 237. Substrate is bound at residue 247 to 248 (NK).

Belongs to the eIF-2B alpha/beta/delta subunits family. MtnA subfamily.

It catalyses the reaction 5-(methylsulfanyl)-alpha-D-ribose 1-phosphate = 5-(methylsulfanyl)-D-ribulose 1-phosphate. It participates in amino-acid biosynthesis; L-methionine biosynthesis via salvage pathway; L-methionine from S-methyl-5-thio-alpha-D-ribose 1-phosphate: step 1/6. In terms of biological role, catalyzes the interconversion of methylthioribose-1-phosphate (MTR-1-P) into methylthioribulose-1-phosphate (MTRu-1-P). This is Methylthioribose-1-phosphate isomerase from Synechococcus sp. (strain ATCC 27144 / PCC 6301 / SAUG 1402/1) (Anacystis nidulans).